The sequence spans 453 residues: Adenylyltransferase and sulfurtransferase MOCS3 (453 aa).

Phosphothreonine is present on threonine 62. Residues glycine 101, aspartate 122, 129–133, lysine 146, and 190–191 each bind ATP; these read SNFHR and DN. 2 residues coordinate Zn(2+): cysteine 231 and cysteine 234. Cysteine 248 serves as the catalytic Glycyl thioester intermediate; for adenylyltransferase activity. Zn(2+) contacts are provided by cysteine 306 and cysteine 309. Residues 355-451 form the Rhodanese domain; sequence QAQPHLLIDV…WTNSVDPSFP (97 aa). The active-site Cysteine persulfide intermediate; for sulfurtransferase activity is the cysteine 410.

This sequence in the N-terminal section; belongs to the HesA/MoeB/ThiF family. UBA4 subfamily. The cofactor is Zn(2+).

It localises to the cytoplasm. It is found in the cytosol. The enzyme catalyses [molybdopterin-synthase sulfur-carrier protein]-C-terminal Gly-Gly + ATP + H(+) = [molybdopterin-synthase sulfur-carrier protein]-C-terminal Gly-Gly-AMP + diphosphate. The catalysed reaction is [molybdopterin-synthase sulfur-carrier protein]-C-terminal Gly-Gly-AMP + S-sulfanyl-L-cysteinyl-[cysteine desulfurase] + AH2 = [molybdopterin-synthase sulfur-carrier protein]-C-terminal-Gly-aminoethanethioate + L-cysteinyl-[cysteine desulfurase] + A + AMP + 2 H(+). The protein operates within tRNA modification; 5-methoxycarbonylmethyl-2-thiouridine-tRNA biosynthesis. Its pathway is cofactor biosynthesis; molybdopterin biosynthesis. Plays a central role in 2-thiolation of mcm(5)S(2)U at tRNA wobble positions of cytosolic tRNA(Lys), tRNA(Glu) and tRNA(Gln). Also essential during biosynthesis of the molybdenum cofactor. Acts by mediating the C-terminal thiocarboxylation of sulfur carriers URM1 and MOCS2A. Its N-terminus first activates URM1 and MOCS2A as acyl-adenylates (-COAMP), then the persulfide sulfur on the catalytic cysteine is transferred to URM1 and MOCS2A to form thiocarboxylation (-COSH) of their C-terminus. The reaction probably involves hydrogen sulfide that is generated from the persulfide intermediate and that acts as a nucleophile towards URM1 and MOCS2A. Subsequently, a transient disulfide bond is formed. Does not use thiosulfate as sulfur donor; NFS1 probably acting as a sulfur donor for thiocarboxylation reactions. The chain is Adenylyltransferase and sulfurtransferase MOCS3 from Drosophila yakuba (Fruit fly).